Reading from the N-terminus, the 150-residue chain is uncharacterized protein (150 aa).

This is an uncharacterized protein from Homo sapiens (Human).